Consider the following 193-residue polypeptide: MRLCDRDIEAWLDEGRLSINPRPPVERINGATVDVRLGNKFRTFRGHTAAFIDLSGPKDEVSAALDRVMSDEIVLDEGEAFYLHPGELALAVTLESVTLPADLVGWLDGRSSLARLGLMVHVTAHRIDPGWSGCIVLEFYNSGKLPLALRPGMLIGALSFEPLSGPAARPYNRREDAKYRNQQGAVASRIDKD.

DCTP contacts are provided by residues 110-115, D128, 136-138, Y171, K178, and Q182; these read RSSLAR and VLE. E138 functions as the Proton donor/acceptor in the catalytic mechanism. The disordered stretch occupies residues 169-193; sequence RPYNRREDAKYRNQQGAVASRIDKD.

This sequence belongs to the dCTP deaminase family. Homotrimer.

It carries out the reaction dCTP + H2O + H(+) = dUTP + NH4(+). The protein operates within pyrimidine metabolism; dUMP biosynthesis; dUMP from dCTP (dUTP route): step 1/2. Catalyzes the deamination of dCTP to dUTP. The protein is dCTP deaminase of Escherichia coli O8 (strain IAI1).